The primary structure comprises 427 residues: Enolase (427 aa).

Residue glutamine 162 coordinates (2R)-2-phosphoglycerate. Glutamate 204 acts as the Proton donor in catalysis. Aspartate 241, glutamate 282, and aspartate 309 together coordinate Mg(2+). (2R)-2-phosphoglycerate-binding residues include lysine 334, arginine 363, serine 364, and lysine 385. Residue lysine 334 is the Proton acceptor of the active site.

It belongs to the enolase family. Mg(2+) is required as a cofactor.

Its subcellular location is the cytoplasm. It is found in the secreted. It localises to the cell surface. It carries out the reaction (2R)-2-phosphoglycerate = phosphoenolpyruvate + H2O. Its pathway is carbohydrate degradation; glycolysis; pyruvate from D-glyceraldehyde 3-phosphate: step 4/5. Catalyzes the reversible conversion of 2-phosphoglycerate (2-PG) into phosphoenolpyruvate (PEP). It is essential for the degradation of carbohydrates via glycolysis. The sequence is that of Enolase from Parafrankia sp. (strain EAN1pec).